Here is a 556-residue protein sequence, read N- to C-terminus: Arginine--tRNA ligase (556 aa).

The 'HIGH' region signature appears at 130-140; it reads ANPTGPIHLGG.

This sequence belongs to the class-I aminoacyl-tRNA synthetase family. In terms of assembly, monomer.

It localises to the cytoplasm. The catalysed reaction is tRNA(Arg) + L-arginine + ATP = L-arginyl-tRNA(Arg) + AMP + diphosphate. The polypeptide is Arginine--tRNA ligase (Corynebacterium jeikeium (strain K411)).